Reading from the N-terminus, the 141-residue chain is Cholinesterase (141 aa).

Residue Asn-39 is glycosylated (N-linked (GlcNAc...) asparagine). 49-50 (GG) contributes to the substrate binding site. The Acyl-ester intermediate role is filled by Ser-131. Ser-131 bears the Phosphoserine mark.

The protein belongs to the type-B carboxylesterase/lipase family. In terms of assembly, homotetramer; disulfide-linked. Dimer of dimers. As to expression, present in most cells except erythrocytes.

The protein resides in the secreted. It carries out the reaction an acylcholine + H2O = a carboxylate + choline + H(+). Its function is as follows. Esterase with broad substrate specificity. Contributes to the inactivation of the neurotransmitter acetylcholine. Can degrade neurotoxic organophosphate esters. The polypeptide is Cholinesterase (BCHE) (Macaca mulatta (Rhesus macaque)).